Reading from the N-terminus, the 367-residue chain is 2-oxoisovalerate dehydrogenase subunit alpha (367 aa).

Substrate-binding positions include Phe66, Tyr95, 128–131 (MPEH), and Ser144. Residue 94 to 96 (YYR) coordinates thiamine diphosphate. Thiamine diphosphate is bound by residues 144–146 (SPI), 174–180 (GDGATSE), 204–208 (NFYAI), and His273. 3 residues coordinate Mg(2+): Asp175, Asn204, and Tyr206.

The protein belongs to the BCKDHA family. Heterotetramer of two alpha and two beta chains. Directly associated with ODBB in the E1 complex. It depends on thiamine diphosphate as a cofactor.

It catalyses the reaction N(6)-[(R)-lipoyl]-L-lysyl-[protein] + 3-methyl-2-oxobutanoate + H(+) = N(6)-[(R)-S(8)-2-methylpropanoyldihydrolipoyl]-L-lysyl-[protein] + CO2. The branched-chain alpha-keto dehydrogenase complex catalyzes the overall conversion of alpha-keto acids to acyl-CoA and CO(2). It contains multiple copies of three enzymatic components: branched-chain alpha-keto acid decarboxylase (E1), lipoamide acyltransferase (E2) and lipoamide dehydrogenase (E3). In Thermus thermophilus (strain ATCC BAA-163 / DSM 7039 / HB27), this protein is 2-oxoisovalerate dehydrogenase subunit alpha.